Here is a 527-residue protein sequence, read N- to C-terminus: Flavonoid 3',5'-hydroxylase CYP75B138 (527 aa).

A helical transmembrane segment spans residues 6–26 (LDIILFISAIVFLSIYYYNLF). Residue C459 participates in heme binding.

The protein belongs to the cytochrome P450 family. Requires heme as cofactor. In terms of tissue distribution, expressed in young cromes.

It is found in the membrane. It carries out the reaction a 3',5'-unsubstituted flavanone + 2 reduced [NADPH--hemoprotein reductase] + 2 O2 = a 3',5'-dihydroxyflavanone + 2 oxidized [NADPH--hemoprotein reductase] + 2 H2O + 2 H(+). The catalysed reaction is (2S)-naringenin + 2 reduced [NADPH--hemoprotein reductase] + 2 O2 = (2S)-dihydrotricetin + 2 oxidized [NADPH--hemoprotein reductase] + 2 H2O + 2 H(+). The enzyme catalyses (2R,3R)-dihydrokaempferol + 2 reduced [NADPH--hemoprotein reductase] + 2 O2 = (2R,3R)-dihydromyricetin + 2 oxidized [NADPH--hemoprotein reductase] + 2 H2O + 2 H(+). It catalyses the reaction kaempferol + 2 reduced [NADPH--hemoprotein reductase] + 2 O2 = myricetin + 2 oxidized [NADPH--hemoprotein reductase] + 2 H2O + 2 H(+). Its pathway is flavonoid metabolism. In terms of biological role, flavonoid 3',5'-hydroxylase that catalyzes the 3'- and 5'-hydroxylation of flavanones, dihydroflavonols and flavonols. Converts narigenin to dihydrotricetin, dihydrokaempferol to dihydromyricetin and kaempferol to myricetin. The sequence is that of Flavonoid 3',5'-hydroxylase CYP75B138 from Crocosmia x crocosmiiflora (Montbretia).